Here is a 91-residue protein sequence, read N- to C-terminus: Acylphosphatase (91 aa).

The 89-residue stretch at 3 to 91 (KLRMNVQGRV…EETEQFKVIQ (89 aa)) folds into the Acylphosphatase-like domain. Catalysis depends on residues R18 and N36.

The protein belongs to the acylphosphatase family.

It carries out the reaction an acyl phosphate + H2O = a carboxylate + phosphate + H(+). In Enterococcus faecalis (strain ATCC 700802 / V583), this protein is Acylphosphatase (acyP).